A 205-amino-acid chain; its full sequence is Thymidylate kinase (205 aa).

11 to 18 (GLDKSGKT) contributes to the ATP binding site.

It belongs to the thymidylate kinase family. In terms of assembly, homodimer; the dimer arrangement is orthogonal and not antiparallel as in human enzyme.

It carries out the reaction dTMP + ATP = dTDP + ADP. It functions in the pathway pyrimidine metabolism; dTTP biosynthesis. Functionally, poxvirus TMP kinase is able to phosphorylate dTMP, dUMP and also dGMP from any purine and pyrimidine nucleoside triphosphate. The large substrate specificity is explained by the presence of a canal connecting the edge of the dimer interface to the TMP base binding pocket, canal not found in the human homolog. The sequence is that of Thymidylate kinase (OPG178) from Homo sapiens (Human).